The primary structure comprises 1355 residues: MTIQQFYRKPAISEYEIKLLKNNLKKQHNIDIESIETEYCFNVQYPDNHKLNESEQSTLVWLLSETFEPKNFSIDKSFLKTTTTTTENEIIIEVGPRMNFTTTYSSNATSICKSCNLSIIDRIERSRRYLVKSVSKLSEKQIDQFLELIHDRMTECLYPTPIKSFDTGIIPKAVVYIPVVEEGRAALERVNKEMGLAFDEQDLALYTDLFQNQLKRNPSDVECFDIGQSNSEHSRHWFFNGKLIVDGNMSDKTLFQIVKNTLKANPQNSLIAFSDNSSSIKGFKTKVLIPKSQIEASEYLEGEREQPIIFTAETHNFPTGIAPFEGAETGTGGRLRDTHATGRGSLVVAGTVGYCVGNLNIPGYELPWENKEYNYPDNMANPLKIEIEASNGASDYGNKFGEPVIIGFTRSYGNTLPNGERREWIKPIMFSGGIGFMDERHLKKEQPEIGMVVVKAGGPAYRIGMGGGSASSMVGGDNKHELDFSAVQRGDAEMGQKLNRIVRSCVESEIHGGCNPIVSVHDQGAGGAGNVLKEIVDPLGAKIYLDRIISGDPTLSAMEIWGAEYQENDALLIKAEHKDYLKKVSERERLPIAFVGDVTGDGIAQLITKDGETPVNLPLDKVLQKMPPKTFVLDHVEKQLKPFTLPKELLVGDHQTCFNECLNRVLRLLSVGSKRFLINKVDRAVTGLVARQQCVGPLHTPVSNVAVISSGYFGKSGAATSIGEQPIKGFISAKSMAYLTVGEALTNLMWASITDLGDVKCSGNWMWAAKLKGEGVELYDAAIEMHDVMVELGIAIDGGKDSLSMAAKAPKSDGSQELVKAPGALVVSTYVPCDDITLTVTPDLKLSSKDDSVILYLDLGCANNFIGGSALTQVFNQVGNDEPHHNTPLLKNTFMAIQKLVKQQLISAGHDRSDGGLITTLIEMSLSGNRGLEINLPDTHNSDQSPLSIIKLLFSEELGAVLEIKKSNQQIVLDILKQFNVPTQVIGNTSCNNNNNNNNNGSDEDLFIVKVGDKLIYNIKLSQLSKQWEETSYQLELLQANPTFVESEMKNLLKRATGKGKGPNYNMTYKISPISKELALLANKAPKVAVIREEGSNGDREMAAAFHFAGFQAFDVTMSDLLNGNIQLDERFKGVAFVGGFSYGDVMDSAKGWAGSIRFNQQVSKQFDHFYGRNDTFSLGLCNGCQLMALLGWVPYRGIEQTHQPRFIHNASGRFESRWVNVKIMPSPALLLKGMEGSVLGVWSQHGEGRFWSEDQSIVNDIKANNLSPIRYVDDDGEITESYPFNPSGTQEGFASLCSKDGRHLAIMPHPERSFLSWQWPFMPENIKQNVGGLDQPSPWIKIFQNAKSFCDSLN.

Residues 326 to 337 and 406 to 408 contribute to the ATP site; these read GAETGTGGRLRD and IGF. Mg(2+) is bound by residues E743, N747, and D911. Residue S913 participates in ATP binding. The region spanning 1087–1325 is the Glutamine amidotransferase type-1 domain; sequence KVAVIREEGS…LSWQWPFMPE (239 aa). Residue C1182 is the Nucleophile of the active site. Active-site residues include H1310 and E1312.

It in the N-terminal section; belongs to the FGAMS family.

The protein resides in the cytoplasm. The catalysed reaction is N(2)-formyl-N(1)-(5-phospho-beta-D-ribosyl)glycinamide + L-glutamine + ATP + H2O = 2-formamido-N(1)-(5-O-phospho-beta-D-ribosyl)acetamidine + L-glutamate + ADP + phosphate + H(+). Its pathway is purine metabolism; IMP biosynthesis via de novo pathway; 5-amino-1-(5-phospho-D-ribosyl)imidazole from N(2)-formyl-N(1)-(5-phospho-D-ribosyl)glycinamide: step 1/2. In terms of biological role, phosphoribosylformylglycinamidine synthase involved in the purines biosynthetic pathway. Catalyzes the ATP-dependent conversion of formylglycinamide ribonucleotide (FGAR) and glutamine to yield formylglycinamidine ribonucleotide (FGAM) and glutamate. The polypeptide is Phosphoribosylformylglycinamidine synthase (purL) (Dictyostelium discoideum (Social amoeba)).